The sequence spans 280 residues: Ribose-phosphate pyrophosphokinase (280 aa).

Residues 32 to 34 and 89 to 90 each bind ATP; these read DGE and RQ. Residues His-122 and Asp-160 each contribute to the Mg(2+) site. The active site involves Lys-183. D-ribose 5-phosphate contacts are provided by residues Arg-185, Asp-209, and 213 to 217; that span reads STGGT.

Belongs to the ribose-phosphate pyrophosphokinase family. Class III (archaeal) subfamily. It depends on Mg(2+) as a cofactor.

It is found in the cytoplasm. It carries out the reaction D-ribose 5-phosphate + ATP = 5-phospho-alpha-D-ribose 1-diphosphate + AMP + H(+). It functions in the pathway metabolic intermediate biosynthesis; 5-phospho-alpha-D-ribose 1-diphosphate biosynthesis; 5-phospho-alpha-D-ribose 1-diphosphate from D-ribose 5-phosphate (route I): step 1/1. With respect to regulation, activated by Co(2+) and Ni(2+) ions, however Mg(2+) ion shows almost no significant effect on the activity. Equally inhibited by ADP, CTP and GTP, while dTTP and UTP are less inhibitory. In terms of biological role, involved in the biosynthesis of the central metabolite phospho-alpha-D-ribosyl-1-pyrophosphate (PRPP) via the transfer of pyrophosphoryl group from ATP to 1-hydroxyl of ribose-5-phosphate (Rib-5-P). It can also use CTP and GTP as substrates in addition to ATP. In Thermococcus kodakarensis (strain ATCC BAA-918 / JCM 12380 / KOD1) (Pyrococcus kodakaraensis (strain KOD1)), this protein is Ribose-phosphate pyrophosphokinase.